The primary structure comprises 247 residues: Cell division protein ZapD (247 aa).

The protein belongs to the ZapD family. As to quaternary structure, interacts with FtsZ.

It is found in the cytoplasm. Functionally, cell division factor that enhances FtsZ-ring assembly. Directly interacts with FtsZ and promotes bundling of FtsZ protofilaments, with a reduction in FtsZ GTPase activity. The sequence is that of Cell division protein ZapD from Escherichia coli O139:H28 (strain E24377A / ETEC).